The following is a 281-amino-acid chain: Undecaprenyl-diphosphatase (281 aa).

The next 8 helical transmembrane spans lie at 4-24 (IEILKSIFFGIVEGITEWLPI), 45-65 (AFMSMFNVVIQLGAILAVMVI), 89-109 (WLKVLIATLPLLGVFKFDDWF), 113-133 (FHNMVSVALMLIIYGVAFIYL), 152-172 (LPYTTAFYIGLFQVLALLPGT), 190-210 (SVVTEFTFYLGIPVMFGASAL), 225-245 (GQLFLLLVAMGVAFAVSMVAI), and 257-277 (FTLFGKYRIVLGSVLLLYSFV).

The protein belongs to the UppP family.

It localises to the cell membrane. It catalyses the reaction di-trans,octa-cis-undecaprenyl diphosphate + H2O = di-trans,octa-cis-undecaprenyl phosphate + phosphate + H(+). Catalyzes the dephosphorylation of undecaprenyl diphosphate (UPP). Confers resistance to bacitracin. In Streptococcus pneumoniae (strain Hungary19A-6), this protein is Undecaprenyl-diphosphatase.